A 545-amino-acid polypeptide reads, in one-letter code: MDFVQHALLTASRGALTMSLNSSLSYRKELSNLTATEGGEGGAVSEFIAIIIITVLVCLGNLVIVVTLYKKSYLLTLSNKFVFSLTLSNFLLSVLVLPFVVTSSIRREWIFGVVWCNFSALLYLLISSASMLTLGVIAIDRYYAVLYPMVYPMKITGNRAVMALVYIWLHSLIGCLPPLFGWSSVEFDEFKWMCVAAWHQEPGYTIFWQIWCALFPFLIMLVCYGFIFRVARVKARKVHCGTVVTVEEDSQRSGRKNSSTSTSSSGSRRNALQGVVYSANQCKALITILVVIGAFMVTWGPYMVVITSEALWGKNCVSPTLETWATWLSFTSAICHPLIYGLWNKTVRKELLGMCFGDRYYRESFVQRQRTSRLFSISNRITDLGLSPHLTALMAGGQSLGHSSSTGDTGFSYSQDSGTDVMLLEDGTSEDNPPQHCTCPPKRRSSVTFEDEVEQIKEAAKNSLLHVKAEVHKSLDSYAASLAKAIEAEAKINLFGEEALPGVLFTARTVPGAGFGGRRGSRTLVNQRLQLQSIKEGNVLAAEQR.

Residues 1-46 (MDFVQHALLTASRGALTMSLNSSLSYRKELSNLTATEGGEGGAVSE) lie on the Extracellular side of the membrane. N-linked (GlcNAc...) asparagine glycans are attached at residues Asn-21 and Asn-32. Residues 47–67 (FIAIIIITVLVCLGNLVIVVT) form a helical membrane-spanning segment. Topologically, residues 68 to 80 (LYKKSYLLTLSNK) are cytoplasmic. A helical transmembrane segment spans residues 81-101 (FVFSLTLSNFLLSVLVLPFVV). Over 102–117 (TSSIRREWIFGVVWCN) the chain is Extracellular. Cys-116 and Cys-194 are joined by a disulfide. Residue Asn-117 is glycosylated (N-linked (GlcNAc...) asparagine). Residues 118–139 (FSALLYLLISSASMLTLGVIAI) traverse the membrane as a helical segment. Residues 140–159 (DRYYAVLYPMVYPMKITGNR) lie on the Cytoplasmic side of the membrane. Residues 160–180 (AVMALVYIWLHSLIGCLPPLF) traverse the membrane as a helical segment. Residues 181-205 (GWSSVEFDEFKWMCVAAWHQEPGYT) lie on the Extracellular side of the membrane. Residues 206-226 (IFWQIWCALFPFLIMLVCYGF) form a helical membrane-spanning segment. Topologically, residues 227–285 (IFRVARVKARKVHCGTVVTVEEDSQRSGRKNSSTSTSSSGSRRNALQGVVYSANQCKAL) are cytoplasmic. The helical transmembrane segment at 286-306 (ITILVVIGAFMVTWGPYMVVI) threads the bilayer. The Extracellular portion of the chain corresponds to 307 to 322 (TSEALWGKNCVSPTLE). Residues 323–343 (TWATWLSFTSAICHPLIYGLW) form a helical membrane-spanning segment. At 344–545 (NKTVRKELLG…EGNVLAAEQR (202 aa)) the chain is on the cytoplasmic side.

This sequence belongs to the G-protein coupled receptor 1 family.

It is found in the cell projection. The protein localises to the cilium membrane. The protein resides in the cell membrane. Key negative regulator of Shh signaling, which promotes the processing of GLI3 into GLI3R during neural tube development. Recruited by TULP3 and the IFT-A complex to primary cilia and acts as a regulator of the PKA-dependent basal repression machinery in Shh signaling by increasing cAMP levels, leading to promote the PKA-dependent processing of GLI3 into GLI3R and repress the Shh signaling. In presence of SHH, it is removed from primary cilia and is internalized into recycling endosomes, preventing its activity and allowing activation of the Shh signaling. Its ligand is unknown. The chain is G-protein coupled receptor 161 (Gpr161) from Mus musculus (Mouse).